The primary structure comprises 67 residues: MPGGVPWSAYLKMLSSSLLAMCAGAQVVHWYYRPDLTIPEIPPKPGELKTELLGLKERRHEPHVSQQ.

The Mitochondrial matrix segment spans residues 1–8 (MPGGVPWS). Residues 9 to 25 (AYLKMLSSSLLAMCAGA) form a helical; Signal-anchor for type II membrane protein membrane-spanning segment. Over 26 to 67 (QVVHWYYRPDLTIPEIPPKPGELKTELLGLKERRHEPHVSQQ) the chain is Mitochondrial intermembrane.

Belongs to the UQCC6 family. As to quaternary structure, interacts with UQCRC1. Interacts with UQCRQ. Interacts with UQCC5. Forms a complex, named COMB/coordinator of mitochondrial CYTB biogenesis, composed of UQCC1, UQCC2, UQCC4, UQCC5 and UQCC6; stabilizes nascent cytochrome b/MT-CYB and promotes its membrane insertion. Forms a complex, named COMA, composed of UQCC1, UQCC2 and UQCC4; activates MT-CYB translation. Forms a complex, named COMC, composed of UQCC1, UQCC2; UQCC3 and UQCC4; mediates MT-CYB hemylation and association with the first nuclear-encoded complex III subunit UQCRQ. Interacts with MT-CYB. In terms of tissue distribution, highly expressed in brown adipose, cardiac and skeletal muscle (at protein level).

Its subcellular location is the mitochondrion inner membrane. In terms of biological role, required for the assembly and stability of the mitochondrial ubiquinol-cytochrome c reductase complex (complex III or cytochrome b-c1 complex), a multisubunit transmembrane complex that is part of the mitochondrial electron transport chain (ETC) which drives oxidative phosphorylation. Mediates early complex III biogenesis. Participates in regulating the levels of electron transport chain proteins, and therefore energy supply, in response to changes in energy demand. Also required for cytochrome c oxidase complex (complex IV) assembly. The sequence is that of Ubiquinol-cytochrome c reductase complex assembly factor 6 from Mus musculus (Mouse).